A 622-amino-acid chain; its full sequence is DNA polymerase II small subunit (622 aa).

Residues 76–113 (ISTGEGSQKVPDHEELEKITNESSVESSISTGETPKTE) form a disordered region. Positions 85 to 95 (VPDHEELEKIT) are enriched in basic and acidic residues. Polar residues predominate over residues 96–109 (NESSVESSISTGET).

Belongs to the DNA polymerase delta/II small subunit family. As to quaternary structure, heterodimer of a large subunit and a small subunit.

The catalysed reaction is DNA(n) + a 2'-deoxyribonucleoside 5'-triphosphate = DNA(n+1) + diphosphate. It carries out the reaction Exonucleolytic cleavage in the 3'- to 5'-direction to yield nucleoside 5'-phosphates.. Possesses two activities: a DNA synthesis (polymerase) and an exonucleolytic activity that degrades single-stranded DNA in the 3' to 5' direction. Has a template-primer preference which is characteristic of a replicative DNA polymerase. This Pyrococcus horikoshii (strain ATCC 700860 / DSM 12428 / JCM 9974 / NBRC 100139 / OT-3) protein is DNA polymerase II small subunit (polB).